The chain runs to 315 residues: Methionyl-tRNA formyltransferase (315 aa).

(6S)-5,6,7,8-tetrahydrofolate is bound at residue 112–115 (SLLP).

Belongs to the Fmt family.

The catalysed reaction is L-methionyl-tRNA(fMet) + (6R)-10-formyltetrahydrofolate = N-formyl-L-methionyl-tRNA(fMet) + (6S)-5,6,7,8-tetrahydrofolate + H(+). Its function is as follows. Attaches a formyl group to the free amino group of methionyl-tRNA(fMet). The formyl group appears to play a dual role in the initiator identity of N-formylmethionyl-tRNA by promoting its recognition by IF2 and preventing the misappropriation of this tRNA by the elongation apparatus. The sequence is that of Methionyl-tRNA formyltransferase from Rhizobium rhizogenes (strain K84 / ATCC BAA-868) (Agrobacterium radiobacter).